The chain runs to 583 residues: Protein LONG AFTER FAR-RED 3 (583 aa).

A helical transmembrane segment spans residues 7-27 (FPVMIGFVSAAVFLLISVAYL). 2 N-linked (GlcNAc...) asparagine glycosylation sites follow: Asn55 and Asn374.

This sequence belongs to the metallo-dependent hydrolases superfamily. As to expression, expressed at low level in seedlings, roots, leaves, stems, flowers, and siliques.

It is found in the membrane. The protein resides in the cytoplasm. Its subcellular location is the perinuclear region. Required for phyA-controlled responses to continuous far-red light (FRc) conditions, including the inhibition of hypocotyl elongation and the regulation of XTH15/XTR7 expression. The polypeptide is Protein LONG AFTER FAR-RED 3 (Arabidopsis thaliana (Mouse-ear cress)).